The primary structure comprises 353 residues: GDP-mannose transporter (353 aa).

Residues 1–31 (MGLLLSYLFGYIFYSVNKKFHIMEKFGASNS) lie on the Cytoplasmic side of the membrane. A helical membrane pass occupies residues 32 to 52 (IVNNGPVSIFAYCASSILMTV). Residues 53–66 (TNKFVVGAYEFNLN) are Lumenal-facing. Residues 67–87 (FFLLAVQAAVCLVTIATLKGL) traverse the membrane as a helical segment. The Cytoplasmic segment spans residues 88–102 (GIITYRQFNKDEAKK). A helical transmembrane segment spans residues 103 to 122 (WFPIAFLLVLMIYTSSKALQ). Residues 123–125 (YLS) are Lumenal-facing. A helical membrane pass occupies residues 126-148 (IPVYTIFKNLTIILIAYGEVIWF). Residues 149 to 154 (GGKVTT) are Cytoplasmic-facing. The helical transmembrane segment at 155–172 (MALGSFILMVLSSVIAYY) threads the bilayer. Topologically, residues 173–187 (GDTAETGEKTAEMHL) are lumenal. Residues 188–208 (LYLGYAWMFTNCFSSAAFVLI) traverse the membrane as a helical segment. Topologically, residues 209 to 227 (MRKRIKLTNFKDFDTMYYN) are cytoplasmic. Residues 228-248 (NLLSLPLLLVFSFLFEDWSSV) traverse the membrane as a helical segment. The Lumenal segment spans residues 249 to 262 (NLNKNFPPDNRNTT). Asn260 is a glycosylation site (N-linked (GlcNAc...) asparagine). A helical transmembrane segment spans residues 263 to 283 (IFVMILSGASSVGISYCSAWC). At 284 to 290 (VRVTSST) the chain is on the cytoplasmic side. The chain crosses the membrane as a helical span at residues 291 to 313 (TYSMVGALNKLPIALSGLVFFNA). The Lumenal segment spans residues 314–316 (AVN). The helical transmembrane segment at 317–336 (FWSVSSIFVGFLAGVFYAVA) threads the bilayer. Residues 337–353 (KQKQQKENAQQLPVANK) lie on the Cytoplasmic side of the membrane.

Belongs to the TPT transporter family. SLC35D subfamily. In terms of assembly, homooligomer.

It is found in the golgi apparatus membrane. Its subcellular location is the cytoplasmic vesicle membrane. The protein resides in the endoplasmic reticulum membrane. Involved in the import of GDP-mannose from the cytoplasm into the Golgi lumen. This Meyerozyma guilliermondii (strain ATCC 6260 / CBS 566 / DSM 6381 / JCM 1539 / NBRC 10279 / NRRL Y-324) (Yeast) protein is GDP-mannose transporter (VRG4).